Reading from the N-terminus, the 124-residue chain is Large ribosomal subunit protein bL12c (124 aa).

The protein belongs to the bacterial ribosomal protein bL12 family. Homodimer. Part of the ribosomal stalk of the 50S ribosomal subunit. Forms a multimeric L10(L12)X complex, where L10 forms an elongated spine to which 2 to 4 L12 dimers bind in a sequential fashion. Binds GTP-bound translation factors.

The protein resides in the plastid. It is found in the chloroplast. Functionally, forms part of the ribosomal stalk which helps the ribosome interact with GTP-bound translation factors. Is thus essential for accurate translation. The protein is Large ribosomal subunit protein bL12c of Cyanidioschyzon merolae (strain NIES-3377 / 10D) (Unicellular red alga).